Reading from the N-terminus, the 389-residue chain is Teichoic acid glycerol-phosphate transferase (389 aa).

This sequence belongs to the CDP-glycerol glycerophosphotransferase family.

It localises to the cell membrane. It carries out the reaction 4-O-[(2R)-glycerylphospho]-N-acetyl-beta-D-mannosaminyl-(1-&gt;4)-N-acetyl-alpha-D-glucosaminyl di-trans,octa-cis-undecaprenyl diphosphate + CDP-glycerol = 4-O-[di(2R)-glycerylphospho]-N-acetyl-beta-D-mannosaminyl-(1-&gt;4)-N-acetyl-alpha-D-glucosaminyl di-trans,octa-cis-undecaprenyl diphosphate + CMP + H(+). The protein operates within cell wall biogenesis; poly(ribitol phosphate) teichoic acid biosynthesis. Catalyzes the addition of a second glycerol phosphate unit from CDP-glycerol to the prenolpyrophosphate-linked disaccharide, to complete the linkage unit. The protein is Teichoic acid glycerol-phosphate transferase (tarF) of Staphylococcus aureus (strain NCTC 8325 / PS 47).